The following is a 45-amino-acid chain: uncharacterized protein (45 aa).

Residues 15–37 (EVVGTLMAVLITFALVAVVFNFI) form a helical membrane-spanning segment.

It localises to the membrane. This is an uncharacterized protein from Archaeoglobus fulgidus (strain ATCC 49558 / DSM 4304 / JCM 9628 / NBRC 100126 / VC-16).